The sequence spans 586 residues: CTP synthase 2 (586 aa).

The 255-residue stretch at 300–554 (SIALVGKYTK…LAATGNLNAH (255 aa)) folds into the Glutamine amidotransferase type-1 domain. Active-site for GATase activity residues include Cys399, His526, and Glu528. Ser568, Ser571, and Ser574 each carry phosphoserine.

This sequence belongs to the CTP synthase family.

The catalysed reaction is UTP + L-glutamine + ATP + H2O = CTP + L-glutamate + ADP + phosphate + 2 H(+). The protein operates within pyrimidine metabolism; CTP biosynthesis via de novo pathway; CTP from UDP: step 2/2. Catalyzes the ATP-dependent amination of UTP to CTP with either L-glutamine or ammonia as the source of nitrogen. Constitutes the rate-limiting enzyme in the synthesis of cytosine nucleotides. This Mus musculus (Mouse) protein is CTP synthase 2 (Ctps2).